A 337-amino-acid polypeptide reads, in one-letter code: Probable cytosolic iron-sulfur protein assembly protein 1 (337 aa).

WD repeat units follow at residues 11–50 (LHND…ENLL), 57–96 (VHKK…LEEG), 109–148 (GHEN…EEYE), 155–194 (EHSQ…WECA), 199–240 (GHEG…EDDQ), 252–290 (AHRS…SEVS), and 301–337 (AHTV…NYQD).

The protein belongs to the WD repeat CIA1 family. Interacts with NAR1.

It is found in the cytoplasm. It localises to the nucleus. In terms of biological role, essential component of the cytosolic iron-sulfur (Fe/S) protein assembly machinery. Required for the maturation of extramitochondrial Fe/S proteins. This Candida glabrata (strain ATCC 2001 / BCRC 20586 / JCM 3761 / NBRC 0622 / NRRL Y-65 / CBS 138) (Yeast) protein is Probable cytosolic iron-sulfur protein assembly protein 1.